The following is a 615-amino-acid chain: Ectoine/glycine betaine/proline transporter EctP (615 aa).

12 helical membrane passes run 24 to 44 (FIFSISVGFIVVFVIATIALG), 62 to 82 (LGWMYIGGVSLVFIFLMGIFA), 102 to 122 (IVWFCMLFAGGVGAVLMFWGV), 156 to 176 (FGIHMWVIMALPGLSLGYFIY), 207 to 227 (LAIVGTTFGIAVSVGLGVLQI), 240 to 260 (VSWVQLLIILIITAVACISVA), 275 to 295 (IAMAVALMFFILFTGPTLTLL), 329 to 349 (WTVFYWAWTICWSPYVGMFVA), 360 to 380 (FIGGVLALPAIFGVVWFSIFG), 417 to 437 (LTGIVSAFALVIIVIFFITSI), 463 to 483 (WACTIGAVAGSLLIISPSSGI), and 489 to 509 (VVIIVAFPFFLVQFVMMFSLL). 2 disordered regions span residues 524 to 562 (TRQWEKTDTPEKLEEHSSQPAPGYDDEGNPLPMPALEHD) and 589 to 615 (PEEAQEMGSRFKIVEQTRPQSRDEYDI). 2 stretches are compositionally biased toward basic and acidic residues: residues 526–540 (QWEKTDTPEKLEEHS) and 600–615 (KIVEQTRPQSRDEYDI).

This sequence belongs to the BCCT transporter (TC 2.A.15) family.

The protein localises to the cell membrane. In terms of biological role, involved in the uptake of osmoprotectants. Can transport ectoine, proline and glycine betaine. Na(+) is probably the coupling ion. The polypeptide is Ectoine/glycine betaine/proline transporter EctP (Corynebacterium glutamicum (strain ATCC 13032 / DSM 20300 / JCM 1318 / BCRC 11384 / CCUG 27702 / LMG 3730 / NBRC 12168 / NCIMB 10025 / NRRL B-2784 / 534)).